Here is a 261-residue protein sequence, read N- to C-terminus: 2-phytyl-1,4-beta-naphthoquinone methyltransferase, chloroplastic (261 aa).

Residues 1–30 (MAALLGIVSPVTFTGKHPVNSRSRRRTVVK) constitute a chloroplast transit peptide.

This sequence belongs to the class I-like SAM-binding methyltransferase superfamily. MenG/UbiE family.

Its subcellular location is the plastid. The protein resides in the chloroplast. It catalyses the reaction demethylphylloquinol + S-adenosyl-L-methionine = phylloquinol + S-adenosyl-L-homocysteine + H(+). Functionally, involved in the biosynthesis of phylloquinone (vitamin K1). Methyltransferase required for the conversion of 2-phytyl-1,4-beta-naphthoquinol to phylloquinol. This chain is 2-phytyl-1,4-beta-naphthoquinone methyltransferase, chloroplastic, found in Arabidopsis thaliana (Mouse-ear cress).